A 156-amino-acid chain; its full sequence is MSYNCCSGNFSSRSFGGYLHYPGCNPYSTALCSPSICQLGSSLYRNCQKTCWEPTSCRKSCYRRRTSMLCSPCQTTCSRSLGFGSSSCHSQGYGSRSCYSLGSGSSGFRFLKYGGCGFPSLSYGSRFCYPNYLASRAWQSSCYRPICGSRFYQFTC.

A run of 4 repeats spans residues 37-46 (CQLGSSLYRN), 47-56 (CQKTCWEPTS), 57-66 (CRKSCYRRRT), and 73-82 (CQTTCSRSLG). Residues 37 to 82 (CQLGSSLYRNCQKTCWEPTSCRKSCYRRRTSMLCSPCQTTCSRSLG) are 4 X 10 AA approximate repeats.

Belongs to the PMG family. As to quaternary structure, interacts with hair keratins.

Functionally, in the hair cortex, hair keratin intermediate filaments are embedded in an interfilamentous matrix, consisting of hair keratin-associated proteins (KRTAP), which are essential for the formation of a rigid and resistant hair shaft through their extensive disulfide bond cross-linking with abundant cysteine residues of hair keratins. The matrix proteins include the high-sulfur and high-glycine-tyrosine keratins. The sequence is that of Keratin-associated protein 13-4 (KRTAP13-4) from Macaca fascicularis (Crab-eating macaque).